Reading from the N-terminus, the 482-residue chain is 23S rRNA (uracil(1939)-C(5))-methyltransferase RlmD (482 aa).

Positions 1 to 33 (MANLFKQSRAKQKNKTTPSQTQTSTKGSARANA) are disordered. Residues 15–28 (KTTPSQTQTSTKGS) show a composition bias toward low complexity. In terms of domain architecture, TRAM spans 51 to 108 (TAQDANNNAITIQELDWMGQGVARGATMYFVEGALPGETCDIEVVSSKKKVVSAKTIS). [4Fe-4S] cluster-binding residues include C121, C127, C130, and C208. Q313, F342, N347, E363, D390, and D411 together coordinate S-adenosyl-L-methionine. C437 serves as the catalytic Nucleophile.

Belongs to the class I-like SAM-binding methyltransferase superfamily. RNA M5U methyltransferase family. RlmD subfamily.

The enzyme catalyses uridine(1939) in 23S rRNA + S-adenosyl-L-methionine = 5-methyluridine(1939) in 23S rRNA + S-adenosyl-L-homocysteine + H(+). Its function is as follows. Catalyzes the formation of 5-methyl-uridine at position 1939 (m5U1939) in 23S rRNA. The sequence is that of 23S rRNA (uracil(1939)-C(5))-methyltransferase RlmD from Alteromonas mediterranea (strain DSM 17117 / CIP 110805 / LMG 28347 / Deep ecotype).